The primary structure comprises 298 residues: Porphobilinogen deaminase (298 aa).

Residue Cys-239 is modified to S-(dipyrrolylmethanemethyl)cysteine.

The protein belongs to the HMBS family. In terms of assembly, monomer. Requires dipyrromethane as cofactor.

The enzyme catalyses 4 porphobilinogen + H2O = hydroxymethylbilane + 4 NH4(+). It participates in porphyrin-containing compound metabolism; protoporphyrin-IX biosynthesis; coproporphyrinogen-III from 5-aminolevulinate: step 2/4. Functionally, tetrapolymerization of the monopyrrole PBG into the hydroxymethylbilane pre-uroporphyrinogen in several discrete steps. The protein is Porphobilinogen deaminase of Orientia tsutsugamushi (strain Boryong) (Rickettsia tsutsugamushi).